The following is a 473-amino-acid chain: Ribulose bisphosphate carboxylase large chain 1 (473 aa).

Asn116 and Thr166 together coordinate substrate. The active-site Proton acceptor is Lys168. A substrate-binding site is contributed by Lys170. The Mg(2+) site is built by Lys194, Asp196, and Glu197. At Lys194 the chain carries N6-carboxylysine. His287 serves as the catalytic Proton acceptor. Arg288, His320, and Ser372 together coordinate substrate.

The protein belongs to the RuBisCO large chain family. Type I subfamily. As to quaternary structure, heterohexadecamer of 8 large chains and 8 small chains. It depends on Mg(2+) as a cofactor.

It catalyses the reaction 2 (2R)-3-phosphoglycerate + 2 H(+) = D-ribulose 1,5-bisphosphate + CO2 + H2O. The catalysed reaction is D-ribulose 1,5-bisphosphate + O2 = 2-phosphoglycolate + (2R)-3-phosphoglycerate + 2 H(+). RuBisCO catalyzes two reactions: the carboxylation of D-ribulose 1,5-bisphosphate, the primary event in carbon dioxide fixation, as well as the oxidative fragmentation of the pentose substrate. Both reactions occur simultaneously and in competition at the same active site. The chain is Ribulose bisphosphate carboxylase large chain 1 from Acidithiobacillus ferrooxidans (strain ATCC 23270 / DSM 14882 / CIP 104768 / NCIMB 8455) (Ferrobacillus ferrooxidans (strain ATCC 23270)).